Consider the following 476-residue polypeptide: Alkaline phosphatase H (476 aa).

The signal sequence occupies residues 1-26; that stretch reads MTPGYPLALSLAVSMAVLGSALPAQA. D77 lines the Mg(2+) pocket. D77 lines the Zn(2+) pocket. S128 (phosphoserine intermediate) is an active-site residue. S128 is subject to Phosphoserine. Mg(2+) is bound by residues D179 and T181. At S206 the chain carries Phosphoserine. Mg(2+) is bound at residue Q346. Positions 353, 357, 395, 396, and 438 each coordinate Zn(2+).

The protein belongs to the alkaline phosphatase family. The cofactor is Mg(2+). Zn(2+) serves as cofactor.

The protein resides in the secreted. The protein localises to the periplasm. The enzyme catalyses a phosphate monoester + H2O = an alcohol + phosphate. Its function is as follows. Has only phosphomonoesterase activity. The sequence is that of Alkaline phosphatase H (phoA) from Pseudomonas aeruginosa (strain UCBPP-PA14).